The following is a 408-amino-acid chain: tRNA(Met) cytidine acetate ligase (408 aa).

Residues 7–20, Gly102, Asn170, and 195–196 each bind ATP; these read IVEY…HKYH and RI.

It belongs to the TmcAL family.

It localises to the cytoplasm. The enzyme catalyses cytidine(34) in elongator tRNA(Met) + acetate + ATP = N(4)-acetylcytidine(34) in elongator tRNA(Met) + AMP + diphosphate. Functionally, catalyzes the formation of N(4)-acetylcytidine (ac(4)C) at the wobble position of elongator tRNA(Met), using acetate and ATP as substrates. First activates an acetate ion to form acetyladenylate (Ac-AMP) and then transfers the acetyl group to tRNA to form ac(4)C34. The sequence is that of tRNA(Met) cytidine acetate ligase from Clostridium kluyveri (strain NBRC 12016).